Consider the following 526-residue polypeptide: Peptide chain release factor 3 (526 aa).

In terms of domain architecture, tr-type G spans 9–277; it reads ERRRTFAIIS…AFAEYAPPPQ (269 aa). GTP is bound by residues 18–25, 86–90, and 140–143; these read SHPDAGKT, DTPGH, and NKLD.

Belongs to the TRAFAC class translation factor GTPase superfamily. Classic translation factor GTPase family. PrfC subfamily.

It is found in the cytoplasm. In terms of biological role, increases the formation of ribosomal termination complexes and stimulates activities of RF-1 and RF-2. It binds guanine nucleotides and has strong preference for UGA stop codons. It may interact directly with the ribosome. The stimulation of RF-1 and RF-2 is significantly reduced by GTP and GDP, but not by GMP. The chain is Peptide chain release factor 3 from Methylococcus capsulatus (strain ATCC 33009 / NCIMB 11132 / Bath).